The primary structure comprises 164 residues: 6,7-dimethyl-8-ribityllumazine synthase (164 aa).

Residues Phe-24, 58-60 (ALE), and 82-84 (AVI) contribute to the 5-amino-6-(D-ribitylamino)uracil site. 87-88 (ET) provides a ligand contact to (2S)-2-hydroxy-3-oxobutyl phosphate. His-90 (proton donor) is an active-site residue. Asn-115 contributes to the 5-amino-6-(D-ribitylamino)uracil binding site. Arg-129 contacts (2S)-2-hydroxy-3-oxobutyl phosphate.

It belongs to the DMRL synthase family.

It carries out the reaction (2S)-2-hydroxy-3-oxobutyl phosphate + 5-amino-6-(D-ribitylamino)uracil = 6,7-dimethyl-8-(1-D-ribityl)lumazine + phosphate + 2 H2O + H(+). Its pathway is cofactor biosynthesis; riboflavin biosynthesis; riboflavin from 2-hydroxy-3-oxobutyl phosphate and 5-amino-6-(D-ribitylamino)uracil: step 1/2. Catalyzes the formation of 6,7-dimethyl-8-ribityllumazine by condensation of 5-amino-6-(D-ribitylamino)uracil with 3,4-dihydroxy-2-butanone 4-phosphate. This is the penultimate step in the biosynthesis of riboflavin. The protein is 6,7-dimethyl-8-ribityllumazine synthase of Ralstonia nicotianae (strain ATCC BAA-1114 / GMI1000) (Ralstonia solanacearum).